A 162-amino-acid chain; its full sequence is Large ribosomal subunit protein uL10 (162 aa).

It belongs to the universal ribosomal protein uL10 family. In terms of assembly, part of the ribosomal stalk of the 50S ribosomal subunit. The N-terminus interacts with L11 and the large rRNA to form the base of the stalk. The C-terminus forms an elongated spine to which L12 dimers bind in a sequential fashion forming a multimeric L10(L12)X complex.

In terms of biological role, forms part of the ribosomal stalk, playing a central role in the interaction of the ribosome with GTP-bound translation factors. In Vibrio parahaemolyticus serotype O3:K6 (strain RIMD 2210633), this protein is Large ribosomal subunit protein uL10.